The chain runs to 761 residues: Ribonucleoside-diphosphate reductase 1 subunit alpha (761 aa).

The 91-residue stretch at 5–95 (LLVTKRDGRT…IFHLRKKAFG (91 aa)) folds into the ATP-cone domain. ATP-binding positions include lysine 9, 15–21 (ERINLDK), threonine 55, and lysine 91. Threonine 209 serves as a coordination point for GDP. Cysteine 225 and cysteine 462 are joined by a disulfide. DTTP contacts are provided by residues 232–234 (DSL), arginine 262, and arginine 269. Residue asparagine 437 coordinates GDP. Catalysis depends on asparagine 437, which acts as the Proton acceptor. The active-site Cysteine radical intermediate is the cysteine 439. Residues glutamate 441 and 623 to 625 (ETS) each bind GDP. Glutamate 441 functions as the Proton acceptor in the catalytic mechanism.

The protein belongs to the ribonucleoside diphosphate reductase large chain family. As to quaternary structure, tetramer of two alpha (R1) and two beta (R2) subunits. The B1 protein is a dimer of alpha subunits. A radical transfer pathway occurs between 'Tyr-122' of R2 and R1.

It catalyses the reaction a 2'-deoxyribonucleoside 5'-diphosphate + [thioredoxin]-disulfide + H2O = a ribonucleoside 5'-diphosphate + [thioredoxin]-dithiol. Under complex allosteric control mediated by deoxynucleoside triphosphates and ATP binding to separate specificity and activation sites on the alpha subunit. The type of nucleotide bound at the specificity site determines substrate preference. It seems probable that ATP makes the enzyme reduce CDP and UDP, dGTP favors ADP reduction and dTTP favors GDP reduction. Stimulated by ATP and inhibited by dATP binding to the activity site. Functionally, provides the precursors necessary for DNA synthesis. Catalyzes the biosynthesis of deoxyribonucleotides from the corresponding ribonucleotides. R1 contains the binding sites for both substrates and allosteric effectors and carries out the actual reduction of the ribonucleotide. This is Ribonucleoside-diphosphate reductase 1 subunit alpha (nrdA) from Salmonella typhimurium (strain LT2 / SGSC1412 / ATCC 700720).